We begin with the raw amino-acid sequence, 195 residues long: Putative inactive carbonic anhydrase 5B-like protein (195 aa).

Threonine 121–threonine 122 is a binding site for substrate.

It belongs to the alpha-carbonic anhydrase family.

This chain is Putative inactive carbonic anhydrase 5B-like protein (CA5BP1), found in Homo sapiens (Human).